Reading from the N-terminus, the 359-residue chain is Protein disulfide-isomerase tigA (359 aa).

Positions 1-19 (MVRLSNLVSCLGLASAVTA) are cleaved as a signal peptide. Thioredoxin domains are found at residues 20 to 129 (AVVD…EKTG) and 131 to 250 (KPRG…EKTG). Active-site nucleophile residues include Cys49, Cys52, Cys169, and Cys172. Intrachain disulfides connect Cys49-Cys52 and Cys169-Cys172. The Prevents secretion from ER signature appears at 356–359 (KDEL).

It belongs to the protein disulfide isomerase family.

It is found in the endoplasmic reticulum lumen. The enzyme catalyses Catalyzes the rearrangement of -S-S- bonds in proteins.. The polypeptide is Protein disulfide-isomerase tigA (tigA) (Aspergillus niger).